A 252-amino-acid polypeptide reads, in one-letter code: 5'-methylthioadenosine/S-adenosylhomocysteine nucleosidase (252 aa).

The Proton acceptor role is filled by E20. Substrate contacts are provided by residues G86, I160, and 181–182 (ME). The active-site Proton donor is D205.

It belongs to the PNP/UDP phosphorylase family. MtnN subfamily. In terms of assembly, homodimer.

It carries out the reaction S-adenosyl-L-homocysteine + H2O = S-(5-deoxy-D-ribos-5-yl)-L-homocysteine + adenine. It catalyses the reaction S-methyl-5'-thioadenosine + H2O = 5-(methylsulfanyl)-D-ribose + adenine. The catalysed reaction is 5'-deoxyadenosine + H2O = 5-deoxy-D-ribose + adenine. Its pathway is amino-acid biosynthesis; L-methionine biosynthesis via salvage pathway; S-methyl-5-thio-alpha-D-ribose 1-phosphate from S-methyl-5'-thioadenosine (hydrolase route): step 1/2. Catalyzes the irreversible cleavage of the glycosidic bond in both 5'-methylthioadenosine (MTA) and S-adenosylhomocysteine (SAH/AdoHcy) to adenine and the corresponding thioribose, 5'-methylthioribose and S-ribosylhomocysteine, respectively. Also cleaves 5'-deoxyadenosine, a toxic by-product of radical S-adenosylmethionine (SAM) enzymes, into 5-deoxyribose and adenine. Thus, is required for in vivo function of the radical SAM enzymes biotin synthase and lipoic acid synthase, that are inhibited by 5'-deoxyadenosine accumulation. The polypeptide is 5'-methylthioadenosine/S-adenosylhomocysteine nucleosidase (Buchnera aphidicola subsp. Baizongia pistaciae (strain Bp)).